The sequence spans 518 residues: D-aminopeptidase (518 aa).

The active-site Nucleophile is serine 62. The active-site Proton donor/acceptor is the lysine 65. The segment at 373 to 392 is disordered; that stretch reads FGTGPEKMDISGENEAQSSM. An important for specificity region spans residues 477 to 487; sequence QRSMDAPSPGE. Residue aspartate 481 coordinates substrate.

Belongs to the peptidase S12 family. Homodimer.

It carries out the reaction Release of an N-terminal D-amino acid from a peptide, Xaa-|-Yaa-, in which Xaa is preferably D-Ala, D-Ser or D-Thr. D-amino acid amides and methyl esters also are hydrolyzed, as is glycine amide.. With respect to regulation, inhibited by beta-lactam compounds such as 6-aminopenicillic acid, 7-aminocephalosporanic acid, benzylpenicillin and ampicillin. Inhibited by p-chloromercuribenzoate. In terms of biological role, hydrolyzes N-terminal residues in D-amino acid-containing peptides. The chain is D-aminopeptidase from Brucella melitensis biotype 2 (strain ATCC 23457).